The primary structure comprises 354 residues: Thiamine thiazole synthase 1, chloroplastic (354 aa).

Residues 1 to 45 constitute a chloroplast transit peptide; it reads MATAAASSLLKSSFAGSRLPAATRTTPASLVVATGPRGAGAGPIC. Substrate is bound by residues alanine 100, 120–121, glycine 128, and valine 193; that span reads EQ. 2,3-didehydroalanine (Cys) is present on cysteine 222. Residues aspartate 224, histidine 239, methionine 291, and 301 to 303 contribute to the substrate site; that span reads RMG.

It belongs to the THI4 family. In terms of assembly, homooctamer. Requires Fe cation as cofactor. Post-translationally, during the catalytic reaction, a sulfide is transferred from Cys-222 to a reaction intermediate, generating a dehydroalanine residue. In terms of tissue distribution, highest expression in developing embryos and green leaves and a very low level expression seen in endosperm, roots, etiolated shoots and immature ears.

Its subcellular location is the plastid. It localises to the chloroplast. It carries out the reaction [ADP-thiazole synthase]-L-cysteine + glycine + NAD(+) = [ADP-thiazole synthase]-dehydroalanine + ADP-5-ethyl-4-methylthiazole-2-carboxylate + nicotinamide + 3 H2O + 2 H(+). Functionally, involved in biosynthesis of the thiamine precursor thiazole. Catalyzes the conversion of NAD and glycine to adenosine diphosphate 5-(2-hydroxyethyl)-4-methylthiazole-2-carboxylic acid (ADT), an adenylated thiazole intermediate. The reaction includes an iron-dependent sulfide transfer from a conserved cysteine residue of the protein to a thiazole intermediate. The enzyme can only undergo a single turnover, which suggests it is a suicide enzyme. May have additional roles in adaptation to various stress conditions and in DNA damage tolerance. This is Thiamine thiazole synthase 1, chloroplastic from Zea mays (Maize).